The primary structure comprises 122 residues: Piercer of microtubule wall 2 protein (122 aa).

Residues 1–23 (MARETDCDLDKKTSLTSDAEMRP) are compositionally biased toward basic and acidic residues. 2 disordered regions span residues 1–26 (MARETDCDLDKKTSLTSDAEMRPEPP) and 99–122 (QNNSLNVGPDRTRTIDSPNYQHTL). Positions 113 to 122 (IDSPNYQHTL) are enriched in polar residues.

It belongs to the PIERCE2 family. As to quaternary structure, microtubule inner protein component of sperm flagellar doublet microtubules. Interacts with CFAP53, ODAD1 and ODAD3; the interactions link the outer dynein arms docking complex (ODA-DC) to the internal microtubule inner proteins (MIP) in cilium axoneme.

Its subcellular location is the cytoplasm. It localises to the cytoskeleton. The protein localises to the cilium axoneme. It is found in the flagellum axoneme. Its function is as follows. Microtubule inner protein involved in the attachment of outer dynein arms (ODAs) to dynein-decorated doublet microtubules (DMTs) in cilia axoneme, which is required for motile cilia beating. In Mus musculus (Mouse), this protein is Piercer of microtubule wall 2 protein.